A 245-amino-acid polypeptide reads, in one-letter code: Flavin-dependent thymidylate synthase (245 aa).

The ThyX domain maps to 6–220 (PRVELLAHTP…PELFAHAGAK (215 aa)). Residues serine 65, 89–91 (RHR), and glutamine 97 contribute to the FAD site. Residues 86 to 89 (QLVR), 97 to 101 (QQSQR), and arginine 159 each bind dUMP. The ThyX motif signature appears at 89-99 (RHRIASFSQQS). FAD contacts are provided by residues 175–177 (NCR) and histidine 181. Arginine 186 serves as a coordination point for dUMP. Residue arginine 186 is the Involved in ionization of N3 of dUMP, leading to its activation of the active site.

Belongs to the thymidylate synthase ThyX family. As to quaternary structure, homotetramer. It depends on FAD as a cofactor.

It catalyses the reaction dUMP + (6R)-5,10-methylene-5,6,7,8-tetrahydrofolate + NADPH + H(+) = dTMP + (6S)-5,6,7,8-tetrahydrofolate + NADP(+). The protein operates within pyrimidine metabolism; dTTP biosynthesis. In terms of biological role, catalyzes the reductive methylation of 2'-deoxyuridine-5'-monophosphate (dUMP) to 2'-deoxythymidine-5'-monophosphate (dTMP) while utilizing 5,10-methylenetetrahydrofolate (mTHF) as the methyl donor, and NADPH and FADH(2) as the reductant. In Nitratidesulfovibrio vulgaris (strain ATCC 29579 / DSM 644 / CCUG 34227 / NCIMB 8303 / VKM B-1760 / Hildenborough) (Desulfovibrio vulgaris), this protein is Flavin-dependent thymidylate synthase.